The following is a 243-amino-acid chain: MEQSSNRPEDFPLNVFSVTPYTPSTADIQVSDDDKAGATLLFSGIFLGLVGITFTVMGWIKYQGVSHFEWTQLLGPILLSVGVTFILISVCKFKMLSCQLCTDNEERVLDSDQTSGGQSFVFTGINQPITFHGATVVQYIPPPYGSQEPLGMNTTYLQPMMNPCGLVPSSGAVAATPSPPQYYTIYPQDNAAFVESEGFSPFVGAGHDRPSSDADQLEGTQMGEEERVCFSPPPYEEIYALPR.

The next 2 helical transmembrane spans lie at 40–60 (LLFS…MGWI) and 73–93 (LLGP…VCKF). A disordered region spans residues 205 to 229 (AGHDRPSSDADQLEGTQMGEEERVC).

In terms of assembly, interacts with SLC34A1; regulates SLC34A1 internalization by PTH and FGF23.

It is found in the endoplasmic reticulum membrane. It localises to the apical cell membrane. Regulator of plasma phosphate homeostasis. Decreases serum inorganic phosphate (Pi) uptake by regulating the sodium-phosphate cotransporter SLC34A1 trafficking by PTH and FGF23 in the kidney. This Rattus norvegicus (Rat) protein is Transmembrane protein 174 (Tmem174).